Consider the following 501-residue polypeptide: Geissoschizine oxidase (501 aa).

Residues 1-21 (MEFSFSSPLLYILYFLLFFIV) traverse the membrane as a helical segment. Position 442 (Cys-442) interacts with heme.

It belongs to the cytochrome P450 family. Heme is required as a cofactor.

The protein resides in the membrane. The catalysed reaction is (19E)-geissoschizine + reduced [NADPH--hemoprotein reductase] + O2 = akuammicine + formate + oxidized [NADPH--hemoprotein reductase] + H2O + H(+). The protein operates within alkaloid biosynthesis. Its function is as follows. A cytochrome P450 monooxygenase involved in the biosynthesis of strychnos monoterpene indole alkaloids (MIAs) natural products, compounds with effects on glucose absorption. Catalyzes the conversion of geissoschizine to akuammicine. The chain is Geissoschizine oxidase from Alstonia scholaris (Dogbane).